We begin with the raw amino-acid sequence, 339 residues long: DNA-directed RNA polymerase subunit alpha (339 aa).

Residues 1-235 (MTIQKNWQEL…DQLNVFVNFE (235 aa)) form an alpha N-terminal domain (alpha-NTD) region. The tract at residues 251–339 (FNPAFLKKVD…ELAKRFEDHY (89 aa)) is alpha C-terminal domain (alpha-CTD).

Belongs to the RNA polymerase alpha chain family. As to quaternary structure, homodimer. The RNAP catalytic core consists of 2 alpha, 1 beta, 1 beta' and 1 omega subunit. When a sigma factor is associated with the core the holoenzyme is formed, which can initiate transcription.

The catalysed reaction is RNA(n) + a ribonucleoside 5'-triphosphate = RNA(n+1) + diphosphate. DNA-dependent RNA polymerase catalyzes the transcription of DNA into RNA using the four ribonucleoside triphosphates as substrates. This chain is DNA-directed RNA polymerase subunit alpha, found in Rhodopseudomonas palustris (strain BisB5).